The sequence spans 833 residues: Leucine--tRNA ligase (833 aa).

The short motif at 41 to 52 is the 'HIGH' region element; sequence PYPSGAGLHVGH. The 'KMSKS' region signature appears at 610 to 614; sequence KMSKS. Position 613 (lysine 613) interacts with ATP.

Belongs to the class-I aminoacyl-tRNA synthetase family.

It is found in the cytoplasm. It carries out the reaction tRNA(Leu) + L-leucine + ATP = L-leucyl-tRNA(Leu) + AMP + diphosphate. The protein is Leucine--tRNA ligase of Streptococcus pyogenes serotype M4 (strain MGAS10750).